Reading from the N-terminus, the 158-residue chain is Small ribosomal subunit protein uS19 (158 aa).

This sequence belongs to the universal ribosomal protein uS19 family.

Its function is as follows. Protein S19 forms a complex with S13 that binds strongly to the 16S ribosomal RNA. This is Small ribosomal subunit protein uS19 from Pyrobaculum aerophilum (strain ATCC 51768 / DSM 7523 / JCM 9630 / CIP 104966 / NBRC 100827 / IM2).